Here is a 408-residue protein sequence, read N- to C-terminus: Histidine--tRNA ligase (408 aa).

This sequence belongs to the class-II aminoacyl-tRNA synthetase family. In terms of assembly, homodimer.

It is found in the cytoplasm. The enzyme catalyses tRNA(His) + L-histidine + ATP = L-histidyl-tRNA(His) + AMP + diphosphate + H(+). In Wolbachia pipientis wMel, this protein is Histidine--tRNA ligase.